The following is a 224-amino-acid chain: MTARAWASWRSSALLLLLVPGYFPLSHPMTVAGPVGGSLSVQCRYEKEHRTLNKFWCRPPQILRCDKIVETKGSAGKRNGRVSIRDSPANLSFTVTLENLTEEDAGTYWCGVDTPWLRDFHDPIVEVEVSVFPAGTTTASSPQSSMGTSGPPTKLPVHTWPSVTRKDSPEPSPHPGSLFSNVRFLLLVLLELPLLLSMLGAVLWVNRPQRSSRSRQNWPKGENQ.

An N-terminal signal peptide occupies residues 1 to 20 (MTARAWASWRSSALLLLLVP). Over 21 to 183 (GYFPLSHPMT…HPGSLFSNVR (163 aa)) the chain is Extracellular. The Ig-like V-type domain occupies 22 to 130 (YFPLSHPMTV…HDPIVEVEVS (109 aa)). 2 disulfides stabilise this stretch: C43–C110 and C57–C65. 2 N-linked (GlcNAc...) asparagine glycosylation sites follow: N90 and N99. Polar residues predominate over residues 136–151 (TTTASSPQSSMGTSGP). Residues 136–174 (TTTASSPQSSMGTSGPPTKLPVHTWPSVTRKDSPEPSPH) form a disordered region. Residues 184-204 (FLLLVLLELPLLLSMLGAVLW) form a helical membrane-spanning segment. At 205 to 224 (VNRPQRSSRSRQNWPKGENQ) the chain is on the cytoplasmic side.

Belongs to the CD300 family. Present on the surface of monocytes, neutrophils, a proportion of peripheral blood T- and B-lymphocytes and lymphocytic cell lines.

The protein localises to the cell membrane. The sequence is that of CMRF35-like molecule 6 (CD300C) from Homo sapiens (Human).